The following is a 373-amino-acid chain: Chaperone protein DnaJ (373 aa).

The 66-residue stretch at 4–69 folds into the J domain; it reads SYYEILEITQ…EKRAIYDRYG (66 aa). A CR-type zinc finger spans residues 135–212; the sequence is GCKKNIDFTY…CKGLGYNESK (78 aa). Zn(2+)-binding residues include C148, C151, C164, C167, C186, C189, C200, and C203. CXXCXGXG motif repeat units follow at residues 148–155, 164–171, 186–193, and 200–207; these read CKTCNGTG, CPKCQGRG, CPDCQGIG, and CSDCKGLG.

The protein belongs to the DnaJ family. In terms of assembly, homodimer. It depends on Zn(2+) as a cofactor.

Its subcellular location is the cytoplasm. In terms of biological role, participates actively in the response to hyperosmotic and heat shock by preventing the aggregation of stress-denatured proteins and by disaggregating proteins, also in an autonomous, DnaK-independent fashion. Unfolded proteins bind initially to DnaJ; upon interaction with the DnaJ-bound protein, DnaK hydrolyzes its bound ATP, resulting in the formation of a stable complex. GrpE releases ADP from DnaK; ATP binding to DnaK triggers the release of the substrate protein, thus completing the reaction cycle. Several rounds of ATP-dependent interactions between DnaJ, DnaK and GrpE are required for fully efficient folding. Also involved, together with DnaK and GrpE, in the DNA replication of plasmids through activation of initiation proteins. The polypeptide is Chaperone protein DnaJ (Campylobacter jejuni subsp. jejuni serotype O:2 (strain ATCC 700819 / NCTC 11168)).